The sequence spans 1379 residues: DNA-directed RNA polymerase subunit beta'' (1379 aa).

Zn(2+) is bound by residues cysteine 224, cysteine 295, cysteine 302, and cysteine 305. A disordered region spans residues 503 to 524 (SVQSLSVKRRSTSKLSETNDEA).

This sequence belongs to the RNA polymerase beta' chain family. RpoC2 subfamily. As to quaternary structure, in plastids the minimal PEP RNA polymerase catalytic core is composed of four subunits: alpha, beta, beta', and beta''. When a (nuclear-encoded) sigma factor is associated with the core the holoenzyme is formed, which can initiate transcription. Zn(2+) is required as a cofactor.

The protein localises to the plastid. It carries out the reaction RNA(n) + a ribonucleoside 5'-triphosphate = RNA(n+1) + diphosphate. Its function is as follows. DNA-dependent RNA polymerase catalyzes the transcription of DNA into RNA using the four ribonucleoside triphosphates as substrates. The protein is DNA-directed RNA polymerase subunit beta'' of Cuscuta exaltata (Tall dodder).